The sequence spans 580 residues: MIVRSLPAALRACARLQPHDPAFTFMDYEQDWDGVAITLTWSQLYRRTLNVARELSRCGSTGDRVVISAPQGLEYVVAFLGALQAGRIAVPLSVPQGGVTDERSDSVLSDSSPVAILTTSSAVDDVVQHVARRPGESPPSIIEVDLLDLDAPNGYTFKEDEYPSTAYLQYTSGSTRTPAGVVMSHQNVRVNFEQLMSGYFADTDGIPPPNSALVSWLPFYHDMGLVIGICAPILGGYPAVLTSPVSFLQRPARWMHLMASDFHAFSAAPNFAFELAARRTTDDDMAGRDLGNILTILSGSERVQAATIKRFADRFARFNLQERVIRPSYGLAEATVYVATSKPGQPPETVDFDTESLSAGHAKPCAGGGATSLISYMLPRSPIVRIVDSDTCIECPDGTVGEIWVHGDNVANGYWQKPDESERTFGGKIVTPSPGTPEGPWLRTGDSGFVTDGKMFIIGRIKDLLIVYGRNHSPDDIEATIQEITRGRCAAISVPGDRSTEKLVAIIELKKRGDSDQDAMARLGAIKREVTSALSSSHGLSVADLVLVAPGSIPITTSGKVRRGACVEQYRQDQFARLDA.

The segment at 421-440 (SERTFGGKIVTPSPGTPEGP) is disordered.

The protein belongs to the ATP-dependent AMP-binding enzyme family.

It catalyses the reaction holo-[mycocerosate synthase] + a long-chain fatty acid + ATP = a long-chain fatty acyl-[mycocerosate synthase] + AMP + diphosphate. The enzyme catalyses a long-chain fatty acid + ATP + H(+) = a long-chain fatty acyl-AMP + diphosphate. It carries out the reaction holo-[mycocerosate synthase] + a long-chain fatty acyl-AMP = a long-chain fatty acyl-[mycocerosate synthase] + AMP + H(+). It participates in lipid metabolism; fatty acid biosynthesis. Its function is as follows. Involved in the biosynthesis of phthiocerol dimycocerosate (PDIM), a cell wall-associated lipid found only in pathogenic mycobacteria. Catalyzes the activation of long-chain fatty acids as acyl-adenylates (acyl-AMP), which are then transferred to the multifunctional polyketide synthase Mas for further chain extension. This Mycobacterium bovis (strain ATCC BAA-935 / AF2122/97) protein is Long-chain-fatty-acid--AMP ligase FadD28 (fadD28).